We begin with the raw amino-acid sequence, 417 residues long: Ig-like V-type domain-containing protein FAM187A (417 aa).

The first 18 residues, 1 to 18, serve as a signal peptide directing secretion; that stretch reads MSLAHTTVLLWAWGSLQA. The Extracellular portion of the chain corresponds to 19–377; the sequence is FEIVEKESVF…ASLSDPETRT (359 aa). 2 N-linked (GlcNAc...) asparagine glycosylation sites follow: Asn-248 and Asn-318. An Ig-like V-type domain is found at 268-362; sequence PWVPQVPIQF…IAGFRLGVIT (95 aa). The cysteines at positions 290 and 346 are disulfide-linked. Residues 378–398 traverse the membrane as a helical segment; that stretch reads AIELTLMGYLLITIFFITIHL. Residues 399-417 are Cytoplasmic-facing; sequence CRCCCQSRCCPNFSAQTLL.

This sequence belongs to the FAM187 family.

Its subcellular location is the membrane. The chain is Ig-like V-type domain-containing protein FAM187A (Fam187a) from Mus musculus (Mouse).